Reading from the N-terminus, the 129-residue chain is uncharacterized protein (129 aa).

It belongs to the asfivirus C129R family.

It localises to the virion. In terms of biological role, plays a role in the inhibition of type I interferon signaling pathway. Mechanistically, specifically interacts with 2',3'-cGAMP and cleaves it via its phosphodiesterase activity. In turn, prevents 2',3'-cGAMP interaction with host ER-resident STING1 leading to inhibition of downstream signaling pathway and type I interferon production. This is an uncharacterized protein from Ornithodoros (relapsing fever ticks).